A 334-amino-acid chain; its full sequence is Holliday junction branch migration complex subunit RuvB (334 aa).

The segment at 4-186 (ADRLIAPISN…FGIVQRLEYY (183 aa)) is large ATPase domain (RuvB-L). ATP-binding positions include I25, R26, G67, K70, T71, T72, 133-135 (EDY), R176, Y186, and R223. T71 provides a ligand contact to Mg(2+). Residues 187–257 (KVADLQHIVQ…TADRALNMLD (71 aa)) form a small ATPAse domain (RuvB-S) region. Residues 260 to 334 (HQGFDYMDRK…RAYLHFGIEK (75 aa)) are head domain (RuvB-H). DNA is bound by residues R315 and R320.

This sequence belongs to the RuvB family. Homohexamer. Forms an RuvA(8)-RuvB(12)-Holliday junction (HJ) complex. HJ DNA is sandwiched between 2 RuvA tetramers; dsDNA enters through RuvA and exits via RuvB. An RuvB hexamer assembles on each DNA strand where it exits the tetramer. Each RuvB hexamer is contacted by two RuvA subunits (via domain III) on 2 adjacent RuvB subunits; this complex drives branch migration. In the full resolvosome a probable DNA-RuvA(4)-RuvB(12)-RuvC(2) complex forms which resolves the HJ.

The protein resides in the cytoplasm. The catalysed reaction is ATP + H2O = ADP + phosphate + H(+). Functionally, the RuvA-RuvB-RuvC complex processes Holliday junction (HJ) DNA during genetic recombination and DNA repair, while the RuvA-RuvB complex plays an important role in the rescue of blocked DNA replication forks via replication fork reversal (RFR). RuvA specifically binds to HJ cruciform DNA, conferring on it an open structure. The RuvB hexamer acts as an ATP-dependent pump, pulling dsDNA into and through the RuvAB complex. RuvB forms 2 homohexamers on either side of HJ DNA bound by 1 or 2 RuvA tetramers; 4 subunits per hexamer contact DNA at a time. Coordinated motions by a converter formed by DNA-disengaged RuvB subunits stimulates ATP hydrolysis and nucleotide exchange. Immobilization of the converter enables RuvB to convert the ATP-contained energy into a lever motion, pulling 2 nucleotides of DNA out of the RuvA tetramer per ATP hydrolyzed, thus driving DNA branch migration. The RuvB motors rotate together with the DNA substrate, which together with the progressing nucleotide cycle form the mechanistic basis for DNA recombination by continuous HJ branch migration. Branch migration allows RuvC to scan DNA until it finds its consensus sequence, where it cleaves and resolves cruciform DNA. The protein is Holliday junction branch migration complex subunit RuvB of Vibrio cholerae serotype O1 (strain ATCC 39541 / Classical Ogawa 395 / O395).